A 58-amino-acid polypeptide reads, in one-letter code: Small ribosomal subunit protein bS21 (58 aa).

Residues 39–58 form a disordered region; the sequence is EKPSVKRKRKSEVARKRKKF. Residues 43-58 show a composition bias toward basic residues; that stretch reads VKRKRKSEVARKRKKF.

Belongs to the bacterial ribosomal protein bS21 family.

The protein is Small ribosomal subunit protein bS21 of Streptococcus pneumoniae (strain ATCC BAA-255 / R6).